The primary structure comprises 142 residues: Large ribosomal subunit protein uL13 (142 aa).

Belongs to the universal ribosomal protein uL13 family. As to quaternary structure, part of the 50S ribosomal subunit.

In terms of biological role, this protein is one of the early assembly proteins of the 50S ribosomal subunit, although it is not seen to bind rRNA by itself. It is important during the early stages of 50S assembly. This chain is Large ribosomal subunit protein uL13, found in Pseudomonas putida (strain W619).